The following is a 269-amino-acid chain: NAD kinase (269 aa).

Residue aspartate 45 is the Proton acceptor of the active site. NAD(+)-binding positions include 45-46 (DG), 122-123 (NE), arginine 149, aspartate 151, and alanine 186.

It belongs to the NAD kinase family. A divalent metal cation serves as cofactor.

The protein resides in the cytoplasm. The enzyme catalyses NAD(+) + ATP = ADP + NADP(+) + H(+). Its function is as follows. Involved in the regulation of the intracellular balance of NAD and NADP, and is a key enzyme in the biosynthesis of NADP. Catalyzes specifically the phosphorylation on 2'-hydroxyl of the adenosine moiety of NAD to yield NADP. This Staphylococcus epidermidis (strain ATCC 35984 / DSM 28319 / BCRC 17069 / CCUG 31568 / BM 3577 / RP62A) protein is NAD kinase.